A 336-amino-acid polypeptide reads, in one-letter code: tRNA N6-adenosine threonylcarbamoyltransferase (336 aa).

Fe cation is bound by residues histidine 114 and histidine 118. Substrate-binding positions include 136–140 (LVSGG), aspartate 169, glycine 182, aspartate 186, and asparagine 275. Aspartate 301 lines the Fe cation pocket.

Belongs to the KAE1 / TsaD family. Requires Fe(2+) as cofactor.

It is found in the cytoplasm. It carries out the reaction L-threonylcarbamoyladenylate + adenosine(37) in tRNA = N(6)-L-threonylcarbamoyladenosine(37) in tRNA + AMP + H(+). In terms of biological role, required for the formation of a threonylcarbamoyl group on adenosine at position 37 (t(6)A37) in tRNAs that read codons beginning with adenine. Is involved in the transfer of the threonylcarbamoyl moiety of threonylcarbamoyl-AMP (TC-AMP) to the N6 group of A37, together with TsaE and TsaB. TsaD likely plays a direct catalytic role in this reaction. The chain is tRNA N6-adenosine threonylcarbamoyltransferase from Streptococcus pneumoniae (strain ATCC 700669 / Spain 23F-1).